We begin with the raw amino-acid sequence, 292 residues long: Ribosomal protein L11 methyltransferase (292 aa).

Residues T143, G164, D186, and N228 each contribute to the S-adenosyl-L-methionine site.

It belongs to the methyltransferase superfamily. PrmA family.

It is found in the cytoplasm. The catalysed reaction is L-lysyl-[protein] + 3 S-adenosyl-L-methionine = N(6),N(6),N(6)-trimethyl-L-lysyl-[protein] + 3 S-adenosyl-L-homocysteine + 3 H(+). In terms of biological role, methylates ribosomal protein L11. In Aeromonas hydrophila subsp. hydrophila (strain ATCC 7966 / DSM 30187 / BCRC 13018 / CCUG 14551 / JCM 1027 / KCTC 2358 / NCIMB 9240 / NCTC 8049), this protein is Ribosomal protein L11 methyltransferase.